The chain runs to 230 residues: Large ribosomal subunit protein uL1 (230 aa).

This sequence belongs to the universal ribosomal protein uL1 family. Part of the 50S ribosomal subunit.

In terms of biological role, binds directly to 23S rRNA. The L1 stalk is quite mobile in the ribosome, and is involved in E site tRNA release. Its function is as follows. Protein L1 is also a translational repressor protein, it controls the translation of the L11 operon by binding to its mRNA. This Bradyrhizobium diazoefficiens (strain JCM 10833 / BCRC 13528 / IAM 13628 / NBRC 14792 / USDA 110) protein is Large ribosomal subunit protein uL1.